Here is a 460-residue protein sequence, read N- to C-terminus: Cysteine--tRNA ligase (460 aa).

Zn(2+) is bound at residue C29. The 'HIGH' region signature appears at 31–41; that stretch reads ATPQSSPHIGH. 3 residues coordinate Zn(2+): C212, H237, and E241. The short motif at 268–272 is the 'KMSKS' region element; sequence KMSKS. K271 contributes to the ATP binding site.

This sequence belongs to the class-I aminoacyl-tRNA synthetase family. In terms of assembly, monomer. The cofactor is Zn(2+).

Its subcellular location is the cytoplasm. It catalyses the reaction tRNA(Cys) + L-cysteine + ATP = L-cysteinyl-tRNA(Cys) + AMP + diphosphate. The polypeptide is Cysteine--tRNA ligase (Corynebacterium glutamicum (strain ATCC 13032 / DSM 20300 / JCM 1318 / BCRC 11384 / CCUG 27702 / LMG 3730 / NBRC 12168 / NCIMB 10025 / NRRL B-2784 / 534)).